Here is a 414-residue protein sequence, read N- to C-terminus: uncharacterized protein (414 aa).

Belongs to the glycosyltransferase 28 family.

This is an uncharacterized protein from Mycobacterium tuberculosis (strain CDC 1551 / Oshkosh).